The following is a 133-amino-acid chain: ATP synthase epsilon chain, chloroplastic (133 aa).

The protein belongs to the ATPase epsilon chain family. In terms of assembly, F-type ATPases have 2 components, CF(1) - the catalytic core - and CF(0) - the membrane proton channel. CF(1) has five subunits: alpha(3), beta(3), gamma(1), delta(1), epsilon(1). CF(0) has three main subunits: a, b and c.

It is found in the plastid. Its subcellular location is the chloroplast thylakoid membrane. In terms of biological role, produces ATP from ADP in the presence of a proton gradient across the membrane. The polypeptide is ATP synthase epsilon chain, chloroplastic (Nephroselmis olivacea (Green alga)).